A 339-amino-acid chain; its full sequence is MFYKIAQKVMFQMDPEKAHHLAIASLKATANTPLDCFYAQKFTQAPVEFMGVTFPNPVGLAAGMDKDGECIDGFHAMGFGHIEVGTVTPRPQPGNDLPRLFRLKPAKAIINRMGFNNKGVDNLVANLKAAKSGALVGVNIGKNKDTPVEQGKDDYLICMEKVYEYSAYIAVNISSPNTPGLRSLQYGDLLDDLLGSLKAKQKDLAEKHGKYVPIALKIAPDLSSEEIEKIADSLIRNQFDGAIATNTTLSRDGVSGLMNSNEAGGLSGKPLNSLSTAVIKQLSDCLKGEIPIIGVGGINTASDALDKLDAGAQMVQIYSGFIYQGPKLIQDIVEAYRAR.

FMN is bound by residues 62–66 and Thr86; that span reads AGMDK. Residue Lys66 coordinates substrate. Residue 111–115 coordinates substrate; sequence NRMGF. Asn139 and Asn172 together coordinate FMN. Asn172 is a substrate binding site. Ser175 acts as the Nucleophile in catalysis. Asn177 contributes to the substrate binding site. Residues Lys217 and Thr245 each coordinate FMN. Position 246 to 247 (246 to 247) interacts with substrate; sequence NT. FMN-binding positions include Gly268, Gly297, and 318–319; that span reads YS.

Belongs to the dihydroorotate dehydrogenase family. Type 2 subfamily. Monomer. It depends on FMN as a cofactor.

Its subcellular location is the cell membrane. It carries out the reaction (S)-dihydroorotate + a quinone = orotate + a quinol. Its pathway is pyrimidine metabolism; UMP biosynthesis via de novo pathway; orotate from (S)-dihydroorotate (quinone route): step 1/1. Functionally, catalyzes the conversion of dihydroorotate to orotate with quinone as electron acceptor. This Shewanella sediminis (strain HAW-EB3) protein is Dihydroorotate dehydrogenase (quinone).